Consider the following 267-residue polypeptide: Neural/ectodermal development factor IMP-L2 (267 aa).

Positions 1–25 (MEAKMNLHVCALALLLFGSIATVRG) are cleaved as a signal peptide. 2 consecutive Ig-like C2-type domains span residues 48 to 149 (PRNR…KTIY) and 174 to 260 (PRII…TFVY). Cystine bridges form between C80–C139 and C195–C244.

As to expression, detected in several sites including the ventral neuroectoderm, the tracheal pits, the pharynx and esophagus, and specific neuronal cell bodies, where it is primarily expressed.

The protein resides in the secreted. The protein localises to the extracellular space. Essential developmental role during embryogenesis, in particular the normal development of the nervous system. May be involved in some aspect of cell adhesion. The sequence is that of Neural/ectodermal development factor IMP-L2 (ImpL2) from Drosophila melanogaster (Fruit fly).